The following is a 293-amino-acid chain: MPELPEVETVRLGLQPAMEGARFDTVALRRADLRFPFQPDFTDRLTGQTVTGLSRRAKYLLADLSSGDALLMHLGMSGSFRVIEPGGEATPGDFHHPRSEDRSHDHVVFSMSSGKTVVFNDPRRFGYMKLFRRAAIEDEPFLKGLGPEPLGNAFDASMLARACAGKKTSLKAALLDQRVVAGLGNIYVCEALFRAHLSPKRLAATLATKAGGPTERAEKLVEAIRTVLHEAIQAGGSSLRDHRQTSGELGYFQHSFAVYDRESEPCRTKGCGGVVKRFVQNGRSTFCCPKCQK.

Proline 2 serves as the catalytic Schiff-base intermediate with DNA. The active-site Proton donor is glutamate 3. The active-site Proton donor; for beta-elimination activity is lysine 58. The DNA site is built by histidine 104, arginine 123, and lysine 166. The FPG-type zinc-finger motif lies at alanine 257–lysine 293. Arginine 283 acts as the Proton donor; for delta-elimination activity in catalysis.

It belongs to the FPG family. As to quaternary structure, monomer. Zn(2+) is required as a cofactor.

It catalyses the reaction Hydrolysis of DNA containing ring-opened 7-methylguanine residues, releasing 2,6-diamino-4-hydroxy-5-(N-methyl)formamidopyrimidine.. It carries out the reaction 2'-deoxyribonucleotide-(2'-deoxyribose 5'-phosphate)-2'-deoxyribonucleotide-DNA = a 3'-end 2'-deoxyribonucleotide-(2,3-dehydro-2,3-deoxyribose 5'-phosphate)-DNA + a 5'-end 5'-phospho-2'-deoxyribonucleoside-DNA + H(+). Functionally, involved in base excision repair of DNA damaged by oxidation or by mutagenic agents. Acts as a DNA glycosylase that recognizes and removes damaged bases. Has a preference for oxidized purines, such as 7,8-dihydro-8-oxoguanine (8-oxoG). Has AP (apurinic/apyrimidinic) lyase activity and introduces nicks in the DNA strand. Cleaves the DNA backbone by beta-delta elimination to generate a single-strand break at the site of the removed base with both 3'- and 5'-phosphates. The chain is Formamidopyrimidine-DNA glycosylase from Rhodopseudomonas palustris (strain BisA53).